A 412-amino-acid polypeptide reads, in one-letter code: Alpha-1-antiproteinase (412 aa).

The signal sequence occupies residues 1–24 (MTPSISWGLLLLAGLFCLVPSFLA). Ser-33 bears the Phosphoserine mark. N-linked (GlcNAc...) asparagine glycosylation is found at Asn-100, Asn-133, Asn-264, and Asn-313. The tract at residues 367 to 386 (AATVLQAVPMSMPPILNFNK) is RCL. Ser-377 carries the post-translational modification Phosphoserine.

It belongs to the serpin family. As to quaternary structure, interacts with CELA2A. Interacts with ERGIC3 and LMAN1/ERGIC53. Interacts with PRSS1/Trypsin. In terms of tissue distribution, expressed not only in liver but also in kidney tubule cells, where it is regulated by androgens during development.

It is found in the secreted. In terms of biological role, inhibitor of serine proteases. Its primary target is elastase, but it also has a moderate affinity for plasmin and thrombin. This Mus caroli (Ryukyu mouse) protein is Alpha-1-antiproteinase (Serpina1).